The sequence spans 513 residues: 5-aminolevulinate synthase, erythroid-specific, mitochondrial (513 aa).

Residues 1-18 (MAAFLRCPLLARHPPLAR) constitute a mitochondrion transit peptide. Residue arginine 98 coordinates succinyl-CoA. Residues cysteine 190 and phenylalanine 191 each coordinate pyridoxal 5'-phosphate. Succinyl-CoA contacts are provided by serine 212 and lysine 231. Pyridoxal 5'-phosphate is bound by residues serine 264, histidine 292, and threonine 320. Lysine 323 is a catalytic residue. Lysine 323 bears the N6-(pyridoxal phosphate)lysine mark. The pyridoxal 5'-phosphate site is built by threonine 352 and threonine 353. Threonine 437 provides a ligand contact to succinyl-CoA.

This sequence belongs to the class-II pyridoxal-phosphate-dependent aminotransferase family. Homodimer. Pyridoxal 5'-phosphate is required as a cofactor. As to expression, erythroid-specific.

It localises to the mitochondrion inner membrane. The enzyme catalyses succinyl-CoA + glycine + H(+) = 5-aminolevulinate + CO2 + CoA. It participates in porphyrin-containing compound metabolism; protoporphyrin-IX biosynthesis; 5-aminolevulinate from glycine: step 1/1. Its function is as follows. Catalyzes the pyridoxal 5'-phosphate (PLP)-dependent condensation of succinyl-CoA and glycine to form aminolevulinic acid (ALA), with CoA and CO2 as by-products. Contributes significantly to heme formation during erythropoiesis. The protein is 5-aminolevulinate synthase, erythroid-specific, mitochondrial (ALAS2) of Gallus gallus (Chicken).